We begin with the raw amino-acid sequence, 722 residues long: Dynein axonemal intermediate chain 7 (722 aa).

Residues 1-15 (MGPKAKKSGSKKKKV) show a composition bias toward basic residues. The segment at 1–20 (MGPKAKKSGSKKKKVTKAER) is disordered.

It belongs to the DNAI7 family. Part of the multisubunit axonemal dynein complex formed at least of two heavy chains and a number of intermediate and light chains. Associates with tubulin. Interacts with microtubule. In terms of processing, ubiquitinated. Ubiquitination leads to its degradation through the 26S proteasome. Ubiquitin-proteasome-mediated DNAI7 degradation occurs in mitosis.

It localises to the cell projection. The protein resides in the cilium. The protein localises to the cytoplasm. Its function is as follows. Via its association with the multisubunit axonemal dynein complex, is potentially involved in the regulation of cilia function. May act as a cell cycle regulator. The protein is Dynein axonemal intermediate chain 7 of Macaca fascicularis (Crab-eating macaque).